Here is a 165-residue protein sequence, read N- to C-terminus: Cytochrome b6-f complex subunit 4 (165 aa).

3 helical membrane-spanning segments follow: residues 36–56, 95–115, and 131–151; these read LLYIFPVVILGTIACNVGLAV, LLGVLLMVSVPAGLLTVPFLE, and TVFLIGTVVALWLGIGATLPI.

It belongs to the cytochrome b family. PetD subfamily. As to quaternary structure, the 4 large subunits of the cytochrome b6-f complex are cytochrome b6, subunit IV (17 kDa polypeptide, petD), cytochrome f and the Rieske protein, while the 4 small subunits are petG, petL, petM and petN. The complex functions as a dimer.

It localises to the plastid. The protein localises to the chloroplast thylakoid membrane. Component of the cytochrome b6-f complex, which mediates electron transfer between photosystem II (PSII) and photosystem I (PSI), cyclic electron flow around PSI, and state transitions. This chain is Cytochrome b6-f complex subunit 4, found in Populus alba (White poplar).